Reading from the N-terminus, the 927-residue chain is Clumping factor A (927 aa).

Residues 1–39 (MNMKKKEKHAIRKKSIGVASVLVGTLIGFGLLSSKEADA) form the signal peptide. A YSIRK-G/S signaling motif motif is present at residues 9 to 20 (HAIRKKSIGVAS). Disordered regions lie at residues 34-200 (SKEA…SNKD) and 529-898 (FNNG…SEDE). The segment at 40 to 542 (SENSVTQSDS…SGSGDGIDKP (503 aa)) is ligand binding A region. Over residues 47-65 (SDSASNESKSNDSSSVSAA) the composition is skewed to low complexity. The span at 71–105 (TNVSDTKTSSNTNNGETSVAQNPAQQETTQSSSTN) shows a compositional bias: polar residues. Composition is skewed to low complexity over residues 106 to 132 (ATTEETPVTGEATTTTTNQANTPATTQ) and 143 to 162 (NQTSNETTSNDTNTVSSVNS). A compositionally biased stretch (polar residues) spans 163-200 (PQNSTNAENVSTTQDTSTEATPSNNESAPQSTDASNKD). Residues 547-565 (QPDEPGEIEPIPEDSDSDP) show a composition bias toward acidic residues. Residues 566 to 598 (GSDSGSDSNSDSGSDSGSDSTSDSGSDSASDSD) show a composition bias toward low complexity. Acidic residues predominate over residues 599–855 (SASDSDSASD…DSDSESDSNS (257 aa)). Residues 856 to 867 (DSESVSNNNVVP) are compositionally biased toward low complexity. Residues 881–890 (NEAKDSKEPL) show a composition bias toward basic and acidic residues. Positions 890–894 (LPDTG) match the LPXTG sorting signal motif. The residue at position 893 (threonine 893) is a Pentaglycyl murein peptidoglycan amidated threonine. Residues 894-927 (GSEDEANTSLIWGLLASIGSLLLFRRKKENKDKK) constitute a propeptide, removed by sortase.

Belongs to the serine-aspartate repeat-containing protein (SDr) family.

It localises to the secreted. The protein resides in the cell wall. Its function is as follows. Cell surface-associated protein implicated in virulence. Promotes bacterial attachment exclusively to the gamma-chain of human fibrinogen. Induces formation of bacterial clumps, which diminish the ability of group IIA phospholipase A2 to cause bacterial phospholipid hydrolysis and killing. Significantly decreases macrophage phagocytosis possibly thanks to the clumps, clumped bacteria being too large to be phagocytosed. Dominant factor responsible for human platelet aggregation, which may be an important mechanism for initiating infective endocarditis. Enhances spleen cell proliferative response in vitro, contributing significantly to the immunostimulatory activity of S.aureus. This chain is Clumping factor A (clfA), found in Staphylococcus aureus (strain NCTC 8325 / PS 47).